A 138-amino-acid polypeptide reads, in one-letter code: Cyclin-dependent kinase 4 inhibitor B (138 aa).

The ANK 1; truncated repeat unit spans residues 13–39; the sequence is GSDEGLASAAARGLVEKVRQLLEAGAD. ANK repeat units follow at residues 46–74, 79–108, and 112–138; these read FGRR…EPNC, TLTR…RLDV, and WGRL…ATGD.

It belongs to the CDKN2 cyclin-dependent kinase inhibitor family. In terms of assembly, heterodimer of CDKN2B with CDK4 or CDK6. Isoform 2 does not interact with CDK4 nor CDK6. As to expression, isoform 2 is expressed in normal (keratinocytes, fibroblasts) and tumor cell lines.

Its subcellular location is the cytoplasm. In terms of biological role, interacts strongly with CDK4 and CDK6. Potent inhibitor. Potential effector of TGF-beta induced cell cycle arrest. The protein is Cyclin-dependent kinase 4 inhibitor B (CDKN2B) of Homo sapiens (Human).